The following is a 201-amino-acid chain: UPF0301 protein RHA1_ro03630 (201 aa).

This sequence belongs to the UPF0301 (AlgH) family.

This is UPF0301 protein RHA1_ro03630 from Rhodococcus jostii (strain RHA1).